The chain runs to 190 residues: MGYRNGNYAAFYVSEPFSESSLGANATKDFVSYNMLRAWKGKDNNYPFNDSHDKTYNVRDGSDWEKTLKPRLRKRLDQSKNIIFFLSKHTENSKALREEIDYGINVKGLPVIVVYPELSEKSDIIDCTTKVFRSEVVNLWSRVPVFKDSMLKVPTIHIPYKKDQIKKALENKDFMINSKISAGSVYFYPC.

The protein belongs to the Thoeris B TIR-like family. In terms of assembly, homodimer.

Its subcellular location is the cytoplasm. Its activity is regulated as follows. Activated upon phage infection. TIR-like domain-containing component of the Thoeris antiviral defense system, composed of ThsA and ThsB. Expression of ThsA and ThsB in B.subtilis (strain BEST7003) confers resistance to phages SBSphiC, SBSphiJ and SPO1. Phage infection activates this protein, generating a signal molecule that in turn activates ThsA. Functionally, probably hydrolyzes NAD(+) to make a cyclic ADP-D-ribose (cADPR) signaling molecule; might make 3'cADPR. In Bacillus amyloliquefaciens (strain Y2) (Bacillus amyloliquefaciens subsp. plantarum (strain B9601-Y2)), this protein is Putative cyclic ADP-D-ribose synthase ThsB.